The sequence spans 227 residues: tRNA (guanine-N(1)-)-methyltransferase (227 aa).

Residues glycine 110 and isoleucine 129 to leucine 134 contribute to the S-adenosyl-L-methionine site.

This sequence belongs to the RNA methyltransferase TrmD family. Homodimer.

Its subcellular location is the cytoplasm. It catalyses the reaction guanosine(37) in tRNA + S-adenosyl-L-methionine = N(1)-methylguanosine(37) in tRNA + S-adenosyl-L-homocysteine + H(+). Specifically methylates guanosine-37 in various tRNAs. In Mycoplasmopsis synoviae (strain 53) (Mycoplasma synoviae), this protein is tRNA (guanine-N(1)-)-methyltransferase.